Here is a 450-residue protein sequence, read N- to C-terminus: Chromosomal replication initiator protein DnaA (450 aa).

A domain I, interacts with DnaA modulators region spans residues 1 to 84 (MENIHDLWDR…AVKFIIPPNQ (84 aa)). The interval 84–111 (QDDEELEFQSSKKKQRKPYEETNDFPQS) is domain II. The disordered stretch occupies residues 89-108 (LEFQSSKKKQRKPYEETNDF). Residues 112-328 (MLNPKYTFDT…GALIRVVAYS (217 aa)) form a domain III, AAA+ region region. The ATP site is built by glycine 156, glycine 158, lysine 159, and threonine 160. Positions 329–450 (SLINKEITAD…QEIQEKLKQL (122 aa)) are domain IV, binds dsDNA.

The protein belongs to the DnaA family. In terms of assembly, oligomerizes as a right-handed, spiral filament on DNA at oriC.

The protein localises to the cytoplasm. Its function is as follows. Plays an essential role in the initiation and regulation of chromosomal replication. ATP-DnaA binds to the origin of replication (oriC) to initiate formation of the DNA replication initiation complex once per cell cycle. Binds the DnaA box (a 9 base pair repeat at the origin) and separates the double-stranded (ds)DNA. Forms a right-handed helical filament on oriC DNA; dsDNA binds to the exterior of the filament while single-stranded (ss)DNA is stabiized in the filament's interior. The ATP-DnaA-oriC complex binds and stabilizes one strand of the AT-rich DNA unwinding element (DUE), permitting loading of DNA polymerase. After initiation quickly degrades to an ADP-DnaA complex that is not apt for DNA replication. Binds acidic phospholipids. The sequence is that of Chromosomal replication initiator protein DnaA from Geobacillus kaustophilus (strain HTA426).